A 326-amino-acid chain; its full sequence is Beta-ketoacyl-[acyl-carrier-protein] synthase III (326 aa).

Catalysis depends on residues cysteine 120 and histidine 253. Positions 254-258 (QANIR) are ACP-binding. Residue asparagine 283 is part of the active site.

The protein belongs to the thiolase-like superfamily. FabH family. Homodimer.

It localises to the cytoplasm. The enzyme catalyses malonyl-[ACP] + acetyl-CoA + H(+) = 3-oxobutanoyl-[ACP] + CO2 + CoA. It functions in the pathway lipid metabolism; fatty acid biosynthesis. In terms of biological role, catalyzes the condensation reaction of fatty acid synthesis by the addition to an acyl acceptor of two carbons from malonyl-ACP. Catalyzes the first condensation reaction which initiates fatty acid synthesis and may therefore play a role in governing the total rate of fatty acid production. Possesses both acetoacetyl-ACP synthase and acetyl transacylase activities. Its substrate specificity determines the biosynthesis of branched-chain and/or straight-chain of fatty acids. This Cupriavidus taiwanensis (strain DSM 17343 / BCRC 17206 / CCUG 44338 / CIP 107171 / LMG 19424 / R1) (Ralstonia taiwanensis (strain LMG 19424)) protein is Beta-ketoacyl-[acyl-carrier-protein] synthase III.